A 378-amino-acid polypeptide reads, in one-letter code: Putative glutamate--cysteine ligase 2-1 (378 aa).

This sequence belongs to the glutamate--cysteine ligase type 2 family. YbdK subfamily.

It catalyses the reaction L-cysteine + L-glutamate + ATP = gamma-L-glutamyl-L-cysteine + ADP + phosphate + H(+). Its function is as follows. ATP-dependent carboxylate-amine ligase which exhibits weak glutamate--cysteine ligase activity. This Corynebacterium efficiens (strain DSM 44549 / YS-314 / AJ 12310 / JCM 11189 / NBRC 100395) protein is Putative glutamate--cysteine ligase 2-1.